Here is a 336-residue protein sequence, read N- to C-terminus: Alcohol dehydrogenase (336 aa).

Residues C37, H58, C89, C92, C95, C103, and C145 each coordinate Zn(2+).

This sequence belongs to the zinc-containing alcohol dehydrogenase family. Zn(2+) serves as cofactor.

The enzyme catalyses a primary alcohol + NAD(+) = an aldehyde + NADH + H(+). It carries out the reaction a secondary alcohol + NAD(+) = a ketone + NADH + H(+). The polypeptide is Alcohol dehydrogenase (adh) (Staphylococcus aureus (strain USA300)).